We begin with the raw amino-acid sequence, 665 residues long: Sodium-dependent phosphate transporter 1-B (665 aa).

Transmembrane regions (helical) follow at residues 26–46 (YMWLLIVGFIIAFVLAFSVGA), 67–87 (ACILASIFETLGSVLLGAKVS), 107–127 (LMAGSVSAMFGSAVWQLAASF), 163–183 (IVASWFLSPLLSGVMSAVLFY), 202–222 (ALPFFYAVTMGINLFSIMFTG), and 235–255 (GVLLISIGFGIITALIVWFAV). Disordered regions lie at residues 294-345 (VPEE…APKT) and 423-442 (ESEFRASEDGDKEKAGAQER). A compositionally biased stretch (low complexity) spans 296–306 (EESSVLSSSTP). Over residues 329–338 (ADQKDCKESD) the composition is skewed to basic and acidic residues. Transmembrane regions (helical) follow at residues 499–519 (VSMLFQFLQILTACFGSFAHG), 548–568 (TPIWLLLYGGVGICVGLWVWG), 588–608 (FSIELASAVTVVVASNIGLPV), and 638–658 (IFMAWFVTVPISGLISAAIMA).

It belongs to the inorganic phosphate transporter (PiT) (TC 2.A.20) family.

The protein localises to the membrane. Sodium-phosphate symporter which plays a fundamental housekeeping role in phosphate transport. The protein is Sodium-dependent phosphate transporter 1-B (slc20a1b) of Danio rerio (Zebrafish).